Reading from the N-terminus, the 152-residue chain is Coiled-coil domain-containing protein 182 (152 aa).

A coiled-coil region spans residues alanine 46–isoleucine 109.

This Mus musculus (Mouse) protein is Coiled-coil domain-containing protein 182 (Ccdc182).